The following is a 1578-amino-acid chain: Chitinase ChiA (1578 aa).

A signal peptide spans 1 to 19; it reads MKHYYRLLFLLLFPLLASA. Positions 25–466 constitute a GH18 1 domain; the sequence is KKVVGYYAQW…NQVDTSFGSV (442 aa). The segment at 26-446 is GH18N; it reads KVVGYYAQWS…GGMIWELSQD (421 aa). Residues 92 to 93 and 119 to 122 each bind chitin; these read DA and GGWT. E162 (proton donor) is an active-site residue. Residues Y163, 249–252, and W441 contribute to the chitin site; that span reads FGYD. Positions 485–536 constitute a CNA-B domain; the sequence is TDVTVELRNASNAVIQTVVSANGNFAFNNLTSGQNYSLTALKATYTFTPVTL. The interval 1142 to 1462 is GH18C; it reads KIILGYAHSW…GLMTWSVNWD (321 aa). The region spanning 1142–1483 is the GH18 2 domain; it reads KIILGYAHSW…KAYAAYFASQ (342 aa). E1264 (proton donor) is an active-site residue. The tract at residues 1473 to 1578 is CTD; it reads SKAYAAYFAS…KSFKVMNFLN (106 aa).

The protein belongs to the glycosyl hydrolase 18 family. Chitinase class II subfamily.

Its subcellular location is the secreted. The enzyme catalyses Random endo-hydrolysis of N-acetyl-beta-D-glucosaminide (1-&gt;4)-beta-linkages in chitin and chitodextrins.. In terms of biological role, major extracellular chitinase, which is essential for chitin utilization. In Flavobacterium johnsoniae (strain ATCC 17061 / DSM 2064 / JCM 8514 / BCRC 14874 / CCUG 350202 / NBRC 14942 / NCIMB 11054 / UW101) (Cytophaga johnsonae), this protein is Chitinase ChiA (chiA).